Reading from the N-terminus, the 778-residue chain is Phosphoribosylformylglycinamidine synthase subunit PurL (778 aa).

H44 is an active-site residue. ATP-binding residues include Y47 and K86. E88 is a binding site for Mg(2+). Residues 89–92 and R111 contribute to the substrate site; that span reads SHNH. Catalysis depends on H90, which acts as the Proton acceptor. Positions 112 and 265 each coordinate Mg(2+). Substrate is bound at residue 309–311; the sequence is ESQ. The disordered stretch occupies residues 455 to 474; the sequence is TRQPPGEGLPGRSGQAGPPK. The ATP site is built by N518 and G555. N556 is a Mg(2+) binding site. S558 lines the substrate pocket.

Belongs to the FGAMS family. As to quaternary structure, monomer. Part of the FGAM synthase complex composed of 1 PurL, 1 PurQ and 2 PurS subunits.

The protein localises to the cytoplasm. The enzyme catalyses N(2)-formyl-N(1)-(5-phospho-beta-D-ribosyl)glycinamide + L-glutamine + ATP + H2O = 2-formamido-N(1)-(5-O-phospho-beta-D-ribosyl)acetamidine + L-glutamate + ADP + phosphate + H(+). Its pathway is purine metabolism; IMP biosynthesis via de novo pathway; 5-amino-1-(5-phospho-D-ribosyl)imidazole from N(2)-formyl-N(1)-(5-phospho-D-ribosyl)glycinamide: step 1/2. Part of the phosphoribosylformylglycinamidine synthase complex involved in the purines biosynthetic pathway. Catalyzes the ATP-dependent conversion of formylglycinamide ribonucleotide (FGAR) and glutamine to yield formylglycinamidine ribonucleotide (FGAM) and glutamate. The FGAM synthase complex is composed of three subunits. PurQ produces an ammonia molecule by converting glutamine to glutamate. PurL transfers the ammonia molecule to FGAR to form FGAM in an ATP-dependent manner. PurS interacts with PurQ and PurL and is thought to assist in the transfer of the ammonia molecule from PurQ to PurL. The chain is Phosphoribosylformylglycinamidine synthase subunit PurL from Symbiobacterium thermophilum (strain DSM 24528 / JCM 14929 / IAM 14863 / T).